Consider the following 287-residue polypeptide: 4-hydroxybenzoate octaprenyltransferase (287 aa).

Helical transmembrane passes span 23–40 (IGSLLLLWPTLWALWLAG), 99–119 (LFVVLVLLAFGLVLTLNTMTI), 141–161 (LPQFVLGAAFGWSIPMAYAAV), 163–183 (ESLPATCWMMFLAYICWTVAY), 213–233 (LIIGLLQFSMLALLLILGTMT), 235–255 (LGMPYYISLLVAGGMFIYQQI), and 266–286 (FKAFHNNKYAGMAIFIGVLFG).

Belongs to the UbiA prenyltransferase family. Requires Mg(2+) as cofactor.

It is found in the cell inner membrane. It catalyses the reaction all-trans-octaprenyl diphosphate + 4-hydroxybenzoate = 4-hydroxy-3-(all-trans-octaprenyl)benzoate + diphosphate. Its pathway is cofactor biosynthesis; ubiquinone biosynthesis. Catalyzes the prenylation of para-hydroxybenzoate (PHB) with an all-trans polyprenyl group. Mediates the second step in the final reaction sequence of ubiquinone-8 (UQ-8) biosynthesis, which is the condensation of the polyisoprenoid side chain with PHB, generating the first membrane-bound Q intermediate 3-octaprenyl-4-hydroxybenzoate. This is 4-hydroxybenzoate octaprenyltransferase from Pectobacterium carotovorum subsp. carotovorum (strain PC1).